Consider the following 428-residue polypeptide: 5'-deoxyadenosine deaminase (428 aa).

Residues histidine 59 and histidine 61 each contribute to the Zn(2+) site. Glutamate 88 and histidine 180 together coordinate substrate. Histidine 207 is a Zn(2+) binding site. Substrate-binding residues include glutamate 210 and aspartate 296. Residue aspartate 296 coordinates Zn(2+).

Belongs to the metallo-dependent hydrolases superfamily. MTA/SAH deaminase family. As to quaternary structure, homotetramer. It depends on Zn(2+) as a cofactor.

The enzyme catalyses 5'-deoxyadenosine + H2O + H(+) = 5'-deoxyinosine + NH4(+). It carries out the reaction S-adenosyl-L-homocysteine + H2O + H(+) = S-inosyl-L-homocysteine + NH4(+). It catalyses the reaction S-methyl-5'-thioadenosine + H2O + H(+) = S-methyl-5'-thioinosine + NH4(+). The catalysed reaction is adenosine + H2O + H(+) = inosine + NH4(+). It functions in the pathway amino-acid biosynthesis; S-adenosyl-L-methionine biosynthesis. In terms of biological role, catalyzes the deamination of three SAM-derived enzymatic products, namely 5'-deoxyadenosine, S-adenosyl-L-homocysteine, and 5'-methylthioadenosine, to produce the inosine analogs. Can also deaminate adenosine. The preferred substrate for this enzyme is 5'-deoxyadenosine, but all these substrates are efficiently deaminated. Likely functions in a S-adenosyl-L-methionine (SAM) recycling pathway from S-adenosyl-L-homocysteine (SAH) produced from SAM-dependent methylation reactions. May also be involved in the recycling of 5'-deoxyadenosine, whereupon the 5'-deoxyribose moiety of 5'-deoxyinosine is further metabolized to deoxyhexoses used for the biosynthesis of aromatic amino acids in methanogens. This chain is 5'-deoxyadenosine deaminase, found in Methanococcus aeolicus (strain ATCC BAA-1280 / DSM 17508 / OCM 812 / Nankai-3).